Consider the following 626-residue polypeptide: Chaperone protein HtpG (626 aa).

The a; substrate-binding stretch occupies residues 1 to 339; it reads MSQNQETRGF…SNDLPLNVSR (339 aa). The b stretch occupies residues 340-555; that stretch reads EILQDNKITA…NDQMTTQMAK (216 aa). A c region spans residues 556–626; it reads LFAAAGQPVP…FIKRINKLLG (71 aa).

It belongs to the heat shock protein 90 family. Homodimer.

Its subcellular location is the cytoplasm. Its function is as follows. Molecular chaperone. Has ATPase activity. The chain is Chaperone protein HtpG from Haemophilus influenzae (strain 86-028NP).